The primary structure comprises 513 residues: Exoglucanase 1 (513 aa).

Residues 1 to 17 (MYRKLAVISAFLATARA) form the signal peptide. Pyrrolidone carboxylic acid is present on Gln18. The segment at 18–453 (QSACTLQSET…GSTGNPSGGN (436 aa)) is catalytic. 10 cysteine pairs are disulfide-bonded: Cys21/Cys89, Cys36/Cys42, Cys67/Cys88, Cys78/Cys84, Cys155/Cys414, Cys189/Cys227, Cys193/Cys226, Cys247/Cys273, Cys255/Cys260, and Cys278/Cys348. Asn62 carries an N-linked (GlcNAc) asparagine glycan. Glu229 serves as the catalytic Nucleophile. Glu234 (proton donor/acceptor) is an active-site residue. Residues Asn287 and Asn401 are each glycosylated (N-linked (GlcNAc) asparagine). Residues 401–437 (NETSSTPGAVRGSCSTSSGVPAQVESQSPNAKVTFSN) show a composition bias toward polar residues. The segment at 401-480 (NETSSTPGAV…TGSSPGPTQS (80 aa)) is disordered. The span at 449–459 (PSGGNPPGGNR) shows a compositional bias: gly residues. A linker region spans residues 454–477 (PPGGNRGTTTTRRPATTTGSSPGP). A compositionally biased stretch (low complexity) spans 460–478 (GTTTTRRPATTTGSSPGPT). An O-linked (Man) threonine glycan is attached at Thr461. O-linked (Man...) threonine glycosylation is found at Thr462, Thr463, and Thr464. A glycan (O-linked (Man) threonine) is linked at Thr469. Thr470 and Thr471 each carry an O-linked (Man...) threonine glycan. Residues Ser473 and Ser474 are each glycosylated (O-linked (Man) serine). Residues 477–513 (PTQSHYGQCGGIGYSGPTVCASGTTCQVLNPYYSQCL) enclose the CBM1 domain. A glycan (O-linked (Man) threonine) is linked at Thr478. Ser480 and Ser491 each carry an O-linked (Man) serine glycan. Cystine bridges form between Cys485–Cys502 and Cys496–Cys512.

This sequence belongs to the glycosyl hydrolase 7 (cellulase C) family. N-glycosylated. The catalytic core domain comprises three N-linked glycans which each consist of a single N-acetylglucosamine residue. Post-translationally, O-glycosylated. Within the linker domain, all 8 threonines are variably glycosylated with between at least one, and up to three, mannose residues per site. All serines in this domain are at least partially glycosylated with a single mannose residue. O-glycosylation of the cellulase linker provides protection from proteolysis. Linker glycans also contribute to binding affinity of cellobiohydrolases to cellulose.

The protein resides in the secreted. The catalysed reaction is Hydrolysis of (1-&gt;4)-beta-D-glucosidic linkages in cellulose and cellotetraose, releasing cellobiose from the non-reducing ends of the chains.. Functionally, exocellobiohydrolases (CBH) that catalyzes the hydrolysis of 1,4-beta-D-glucosidic bonds in cellulose to release the disaccharide cellobiose. The degradation of cellulose involves an interplay between different cellulolytic enzymes. Hydrolysis starts with endoglucanases (EGs), which cut internal beta-1,4-glucosidic bonds in cellulose to reduce the polymerization degree of the substrate and create new chain ends for exocellobiohydrolases (CBHs). The CBHs release the disaccharide cellobiose from the non-reducing end of the cellulose polymer chain. Finally, beta-1,4-glucosidases hydrolyze the cellobiose and other short cello-oligosaccharides into glucose units. The protein is Exoglucanase 1 (cbh1) of Hypocrea jecorina (Trichoderma reesei).